Consider the following 318-residue polypeptide: NADH-ubiquinone oxidoreductase chain 1 (318 aa).

Transmembrane regions (helical) follow at residues 2-22, 76-96, 100-120, 146-166, 171-191, 222-242, 253-273, and 294-314; these read PMIN…FLML, ALAL…IPLI, LGLL…LWSG, LALI…SALI, HSWL…STLA, LFFM…TMIF, ELYT…FLWI, and LPLT…TSGI.

The protein belongs to the complex I subunit 1 family. In terms of assembly, core subunit of respiratory chain NADH dehydrogenase (Complex I) which is composed of 45 different subunits.

The protein resides in the mitochondrion inner membrane. It carries out the reaction a ubiquinone + NADH + 5 H(+)(in) = a ubiquinol + NAD(+) + 4 H(+)(out). Core subunit of the mitochondrial membrane respiratory chain NADH dehydrogenase (Complex I) which catalyzes electron transfer from NADH through the respiratory chain, using ubiquinone as an electron acceptor. Essential for the catalytic activity and assembly of complex I. This Pongo abelii (Sumatran orangutan) protein is NADH-ubiquinone oxidoreductase chain 1 (MT-ND1).